Here is a 309-residue protein sequence, read N- to C-terminus: MSIRIIPQDQLEKSDKRTAEVIPPLLFPRLKNLYNRRAARLRELAENNPLGDYLRFAALIAHAQEVVLYDHPLEMDLTARIKAAAEQGKPPLDIHVLPRDGHWQKLLQSLIAELKPEMSGPALAVIENLEKASAQELETMASALFSADFSAVSSDKAPFIWAALSLYWAQMASLIPGKARAEYGEARQFCPVCGSIPVSSMVHIGSSQGLRYLHCNLCETEWHVVRVKCSNCEQTRDLHYWSLESEQAAIKAESCGDCGTYLKILYQEKDPNVEPVADDLASLVLDARMEQEGFARSSINPFLFPGEGE.

The protein belongs to the FdhE family.

Its subcellular location is the cytoplasm. Functionally, necessary for formate dehydrogenase activity. The polypeptide is Protein FdhE homolog (Cronobacter sakazakii (strain ATCC BAA-894) (Enterobacter sakazakii)).